Consider the following 416-residue polypeptide: Sulfoquinovosyl glycerol-binding protein SmoF (416 aa).

An N-terminal signal peptide occupies residues 1 to 29 (MTLKTIRGKALMGAALCATMLTFSGQAFA). Glutamine 40 provides a ligand contact to 3-(6-sulfo-alpha-D-quinovosyl)glycerol. A 6-sulfo-D-quinovose-binding site is contributed by histidine 41. Residues serine 71, aspartate 95, aspartate 141, glycine 194, threonine 248, glycine 303, tryptophan 304, and arginine 373 each contribute to the 3-(6-sulfo-alpha-D-quinovosyl)glycerol site. Glycine 303, tryptophan 304, and arginine 373 together coordinate 6-sulfo-D-quinovose.

This sequence belongs to the bacterial solute-binding protein 1 family. In terms of assembly, the complex is probably composed of two ATP-binding proteins (SmoE), two transmembrane proteins (SmoG and SmoH) and a solute-binding protein (SmoF).

The protein resides in the periplasm. Functionally, part of the ABC transporter complex SmoEFGH involved in sulfoquinovosyl glycerol (SQGro) uptake. Binds sulfoquinovosyl glycerol (SQGro). Can also bind sulfoquinovose (SQ), methyl alpha-sulfoquinovoside (SQMe) and a short-chain derivative of sulfoquinovosyl diacylglycerol (SQDG). Cannot bind D-glucose and D-glucuronic acid. This Agrobacterium fabrum (strain C58 / ATCC 33970) (Agrobacterium tumefaciens (strain C58)) protein is Sulfoquinovosyl glycerol-binding protein SmoF.